The primary structure comprises 201 residues: Small ribosomal subunit protein uS4c (201 aa).

The segment at 15-45 (LGDLPGLSRKAIKRSYPPGEHGQKSRKPSEY) is disordered. The segment covering 35-45 (HGQKSRKPSEY) has biased composition (basic and acidic residues). The S4 RNA-binding domain maps to 90–153 (MRLDNTVFRL…ASRKLVENYL (64 aa)).

This sequence belongs to the universal ribosomal protein uS4 family. In terms of assembly, part of the 30S ribosomal subunit. Contacts protein S5. The interaction surface between S4 and S5 is involved in control of translational fidelity.

It is found in the plastid. It localises to the chloroplast. One of the primary rRNA binding proteins, it binds directly to 16S rRNA where it nucleates assembly of the body of the 30S subunit. Its function is as follows. With S5 and S12 plays an important role in translational accuracy. The protein is Small ribosomal subunit protein uS4c (rps4) of Pyropia yezoensis (Susabi-nori).